We begin with the raw amino-acid sequence, 249 residues long: MRILISNDDGVNAPGIAALHQALADYAECVVIAPAEDRSGASSALTLDRPLHPMALSNGYISLNGTPTDCVHLGLNGLLEQTPDMVVSGINLGANLGDDVLYSGTVAAALEGRFLARPAFAFSLLSRLPDNLPTAAYFARKLVEAHERLELPPRTVLNVNVPNLPLEHIRGVQLTRLGHRARAAAPVKVVNPRGKEGYWIAAAGDVEDGSQGTDFHAVMQGYVSITPLRLDRTFNEALETMDGWLEGIF.

A divalent metal cation-binding residues include Asp-8, Asp-9, Ser-39, and Asn-91.

It belongs to the SurE nucleotidase family. The cofactor is a divalent metal cation.

The protein resides in the cytoplasm. The enzyme catalyses a ribonucleoside 5'-phosphate + H2O = a ribonucleoside + phosphate. Functionally, nucleotidase that shows phosphatase activity on nucleoside 5'-monophosphates. The chain is 5'-nucleotidase SurE from Ectopseudomonas mendocina (strain ymp) (Pseudomonas mendocina).